Consider the following 925-residue polypeptide: Bifunctional glutamine synthetase adenylyltransferase/adenylyl-removing enzyme (925 aa).

The tract at residues 1-426 is adenylyl removase; sequence MTDASDLLSL…AQFDQVFADK (426 aa). The interval 436–925 is adenylyl transferase; it reads DQAAGCIWSG…AALWARVFGA (490 aa).

Belongs to the GlnE family. Requires Mg(2+) as cofactor.

The catalysed reaction is [glutamine synthetase]-O(4)-(5'-adenylyl)-L-tyrosine + phosphate = [glutamine synthetase]-L-tyrosine + ADP. It catalyses the reaction [glutamine synthetase]-L-tyrosine + ATP = [glutamine synthetase]-O(4)-(5'-adenylyl)-L-tyrosine + diphosphate. Involved in the regulation of glutamine synthetase GlnA, a key enzyme in the process to assimilate ammonia. When cellular nitrogen levels are high, the C-terminal adenylyl transferase (AT) inactivates GlnA by covalent transfer of an adenylyl group from ATP to specific tyrosine residue of GlnA, thus reducing its activity. Conversely, when nitrogen levels are low, the N-terminal adenylyl removase (AR) activates GlnA by removing the adenylyl group by phosphorolysis, increasing its activity. The regulatory region of GlnE binds the signal transduction protein PII (GlnB) which indicates the nitrogen status of the cell. This is Bifunctional glutamine synthetase adenylyltransferase/adenylyl-removing enzyme from Burkholderia mallei (strain ATCC 23344).